Here is a 290-residue protein sequence, read N- to C-terminus: 4-hydroxy-tetrahydrodipicolinate synthase (290 aa).

Pyruvate is bound at residue threonine 44. The Proton donor/acceptor role is filled by tyrosine 132. Lysine 160 (schiff-base intermediate with substrate) is an active-site residue. Isoleucine 202 provides a ligand contact to pyruvate.

It belongs to the DapA family. Homotetramer; dimer of dimers.

The protein resides in the cytoplasm. It catalyses the reaction L-aspartate 4-semialdehyde + pyruvate = (2S,4S)-4-hydroxy-2,3,4,5-tetrahydrodipicolinate + H2O + H(+). It functions in the pathway amino-acid biosynthesis; L-lysine biosynthesis via DAP pathway; (S)-tetrahydrodipicolinate from L-aspartate: step 3/4. In terms of biological role, catalyzes the condensation of (S)-aspartate-beta-semialdehyde [(S)-ASA] and pyruvate to 4-hydroxy-tetrahydrodipicolinate (HTPA). This chain is 4-hydroxy-tetrahydrodipicolinate synthase, found in Trichlorobacter lovleyi (strain ATCC BAA-1151 / DSM 17278 / SZ) (Geobacter lovleyi).